The following is a 126-amino-acid chain: Small ribosomal subunit protein uS12 (126 aa).

Positions 1–28 are disordered; the sequence is MPTINQLVRKGRRKVRTKSKSPALDGNP. Positions 9–19 are enriched in basic residues; that stretch reads RKGRRKVRTKS. Position 89 is a 3-methylthioaspartic acid (D89). The disordered stretch occupies residues 106–126; that stretch reads GVEKRRRSRSKYGVKRPKAAK. Residues 109–126 show a composition bias toward basic residues; the sequence is KRRRSRSKYGVKRPKAAK.

It belongs to the universal ribosomal protein uS12 family. Part of the 30S ribosomal subunit. Contacts proteins S8 and S17. May interact with IF1 in the 30S initiation complex.

In terms of biological role, with S4 and S5 plays an important role in translational accuracy. Interacts with and stabilizes bases of the 16S rRNA that are involved in tRNA selection in the A site and with the mRNA backbone. Located at the interface of the 30S and 50S subunits, it traverses the body of the 30S subunit contacting proteins on the other side and probably holding the rRNA structure together. The combined cluster of proteins S8, S12 and S17 appears to hold together the shoulder and platform of the 30S subunit. This Opitutus terrae (strain DSM 11246 / JCM 15787 / PB90-1) protein is Small ribosomal subunit protein uS12.